Reading from the N-terminus, the 211-residue chain is ATP phosphoribosyltransferase (211 aa).

This sequence belongs to the ATP phosphoribosyltransferase family. Short subfamily. In terms of assembly, heteromultimer composed of HisG and HisZ subunits.

The protein resides in the cytoplasm. It carries out the reaction 1-(5-phospho-beta-D-ribosyl)-ATP + diphosphate = 5-phospho-alpha-D-ribose 1-diphosphate + ATP. It participates in amino-acid biosynthesis; L-histidine biosynthesis; L-histidine from 5-phospho-alpha-D-ribose 1-diphosphate: step 1/9. In terms of biological role, catalyzes the condensation of ATP and 5-phosphoribose 1-diphosphate to form N'-(5'-phosphoribosyl)-ATP (PR-ATP). Has a crucial role in the pathway because the rate of histidine biosynthesis seems to be controlled primarily by regulation of HisG enzymatic activity. In Pseudomonas putida (strain ATCC 47054 / DSM 6125 / CFBP 8728 / NCIMB 11950 / KT2440), this protein is ATP phosphoribosyltransferase.